Here is a 241-residue protein sequence, read N- to C-terminus: Agamous-like MADS-box protein AGL8 homolog (241 aa).

The MADS-box domain occupies 3 to 57; the sequence is RGRVQLKRIENKINRQVTFSKRRSGLLKKAHEISVLCDAEVALVIFSSKGKLFEY. Residues 88–178 form the K-box domain; the sequence is SENWVLEHAK…LKKIKEREKN (91 aa).

It localises to the nucleus. In terms of biological role, probable transcription factor. The polypeptide is Agamous-like MADS-box protein AGL8 homolog (AGL8) (Sinapis alba (White mustard)).